Reading from the N-terminus, the 170-residue chain is Translocon-associated protein subunit gamma (170 aa).

Residues 1–24 (MAEVDEFSAFRHENDVSIEQRIVY) lie on the Lumenal side of the membrane. A helical membrane pass occupies residues 25–45 (FINSLIVALVPVYLYHAIFFM). At 46-51 (SIDDHM) the chain is on the cytoplasmic side. The chain crosses the membrane as a helical span at residues 52–72 (IIYGSVTLFAAIVLTFAYNNI). Residues 73–121 (YRMKRLKLSASREHISIASKNKVGDKKKFAAAQKEVQALVTSHEAIAAS) are Lumenal-facing. A helical membrane pass occupies residues 122–141 (IMYNNAVFLICVSIFSFIIF). Residues 142–145 (KNVP) lie on the Cytoplasmic side of the membrane. The chain crosses the membrane as a helical span at residues 146-168 (LVYNYIISISLGAGLTSFLSTSS).

It belongs to the TRAP-gamma family. Heterotrimer of TRAP-alpha, TRAP-beta and TRAP-gamma.

The protein resides in the endoplasmic reticulum membrane. Functionally, TRAP proteins are part of a complex whose function is to bind calcium to the ER membrane and thereby regulate the retention of ER resident proteins. The polypeptide is Translocon-associated protein subunit gamma (ssr3) (Dictyostelium discoideum (Social amoeba)).